Here is a 150-residue protein sequence, read N- to C-terminus: Troponin C, isotype gamma (150 aa).

An N-acetylmethionine modification is found at Met-1. 4 EF-hand domains span residues 7-42, 43-78, 83-118, and 119-150; these read EQLS…MGVK, ISEK…FLIE, ALKA…LDNR, and LTED…MMSG. Ca(2+) contacts are provided by Asp-56, Asp-58, Ser-60, Glu-62, and Glu-67. Residues Asp-132, Asp-134, Ser-136, Thr-138, and Glu-143 each coordinate Ca(2+).

It belongs to the troponin C family.

Functionally, troponin is the central regulatory protein of striated muscle contraction. Tn consists of three components: Tn-I which is the inhibitor of actomyosin ATPase, Tn-T which contains the binding site for tropomyosin and Tn-C. The binding of calcium to Tn-C abolishes the inhibitory action of Tn on actin filaments. This is Troponin C, isotype gamma from Astacus leptodactylus (Turkish narrow-clawed crayfish).